Reading from the N-terminus, the 139-residue chain is Ribulose bisphosphate carboxylase small subunit (139 aa).

This sequence belongs to the RuBisCO small chain family. Heterohexadecamer of 8 large and 8 small subunits.

Its subcellular location is the plastid. It is found in the chloroplast. Functionally, ruBisCO catalyzes two reactions: the carboxylation of D-ribulose 1,5-bisphosphate, the primary event in carbon dioxide fixation, as well as the oxidative fragmentation of the pentose substrate in the photorespiration process. Both reactions occur simultaneously and in competition at the same active site. Although the small subunit is not catalytic it is essential for maximal activity. The protein is Ribulose bisphosphate carboxylase small subunit of Pylaiella littoralis (Seaweed).